A 319-amino-acid polypeptide reads, in one-letter code: 12-(S)-hydroxy-5,8,10,14-eicosatetraenoic acid receptor (319 aa).

The Extracellular portion of the chain corresponds to 1–16; that stretch reads MERTNCSAASTVVETA. Asparagine 5 carries an N-linked (GlcNAc...) asparagine glycan. A helical transmembrane segment spans residues 17 to 37; that stretch reads VGTMLTLECVLGLMGNAVALW. The Cytoplasmic portion of the chain corresponds to 38–52; it reads TFFYRLKVWKPYAVY. A helical membrane pass occupies residues 53–73; it reads LFNLVVADLLLATSLPFFAAF. The Extracellular portion of the chain corresponds to 74–91; the sequence is YLKGKTWKLGHMPCQVLL. The helical transmembrane segment at 92 to 110 threads the bilayer; that stretch reads FLLAFSRGVGVAFLTTVAL. At 111–131 the chain is on the cytoplasmic side; it reads DRYLRVVHPRLRVNLLSLRAA. A helical transmembrane segment spans residues 132 to 152; that stretch reads WGISSLIWLLMVVLTPQNLLT. The Extracellular segment spans residues 153 to 180; that stretch reads CRTTQNSTECPSFYPTGGAKAIATCQEV. The helical transmembrane segment at 181–201 threads the bilayer; that stretch reads LFFLQVLLPFGLISFCNSGLI. At 202–219 the chain is on the cytoplasmic side; sequence RTLQKRLRESDKQPRIRR. A helical transmembrane segment spans residues 220 to 240; the sequence is ARVLVAIVLLLFGLCFLPSVL. Residues 241-265 are Extracellular-facing; that stretch reads TRVLVHIFQEFKSCSVQQAIVRASD. The helical transmembrane segment at 266-284 threads the bilayer; it reads IAGSLTCLHSTLSPAIYCF. Over 285–319 the chain is Cytoplasmic; it reads SNPAFTHSYRKVLKSLRGRRKAAESPSDNLRDSYS.

The protein belongs to the G-protein coupled receptor 1 family. As to quaternary structure, interacts with KRAS; in a farnesylation-dependent manner.

It localises to the cell membrane. In terms of biological role, high-affinity receptor for 12-(S)-hydroxy-5,8,10,14-eicosatetraenoic acid (12-S-HETE), with much lower affinities for other HETE isomers. 12-S-HETE is a eicosanoid, a 12-lipoxygenase (ALOX12) metabolite of arachidonic acid, involved in many physiologic and pathologic processes, such as cell growth, adhesion, inflammation and cancer promotion. 12-S-HETE-binding leads to activation of ERK1/2 (MAPK3/MAPK1), MEK, and NF-kappa-B pathways and leads to cell growth. Plays a crucial role for proliferation, survival and macropinocytosis of KRAS-dependent cancer cells by mediating the translocation of KRAS from the endoplasmic reticulum to the plasma membrane (PM) and its association with the PM. Contributes to enhanced immune responses by inducing dendrite protrusion of small intestinal CX3CR1(+) phagocytes for the uptake of luminal antigens. Also acts as a key receptor for 12-(S)-HETE-mediated liver ischemia reperfusion injury. Proton-sensing G protein-coupled receptor. This chain is 12-(S)-hydroxy-5,8,10,14-eicosatetraenoic acid receptor (Gpr31), found in Mus musculus (Mouse).